Here is a 184-residue protein sequence, read N- to C-terminus: ATP synthase subunit delta (184 aa).

The protein belongs to the ATPase delta chain family. F-type ATPases have 2 components, F(1) - the catalytic core - and F(0) - the membrane proton channel. F(1) has five subunits: alpha(3), beta(3), gamma(1), delta(1), epsilon(1). F(0) has three main subunits: a(1), b(2) and c(10-14). The alpha and beta chains form an alternating ring which encloses part of the gamma chain. F(1) is attached to F(0) by a central stalk formed by the gamma and epsilon chains, while a peripheral stalk is formed by the delta and b chains.

It localises to the cell membrane. In terms of biological role, f(1)F(0) ATP synthase produces ATP from ADP in the presence of a proton or sodium gradient. F-type ATPases consist of two structural domains, F(1) containing the extramembraneous catalytic core and F(0) containing the membrane proton channel, linked together by a central stalk and a peripheral stalk. During catalysis, ATP synthesis in the catalytic domain of F(1) is coupled via a rotary mechanism of the central stalk subunits to proton translocation. Functionally, this protein is part of the stalk that links CF(0) to CF(1). It either transmits conformational changes from CF(0) to CF(1) or is implicated in proton conduction. The sequence is that of ATP synthase subunit delta from Bacillus licheniformis (strain ATCC 14580 / DSM 13 / JCM 2505 / CCUG 7422 / NBRC 12200 / NCIMB 9375 / NCTC 10341 / NRRL NRS-1264 / Gibson 46).